A 227-amino-acid polypeptide reads, in one-letter code: Cytochrome c oxidase subunit 2 (227 aa).

Topologically, residues methionine 1–serine 14 are mitochondrial intermembrane. Residues proline 15–methionine 45 traverse the membrane as a helical segment. The Mitochondrial matrix portion of the chain corresponds to leucine 46 to glutamine 59. A helical membrane pass occupies residues glutamate 60–methionine 87. Over aspartate 88–isoleucine 227 the chain is Mitochondrial intermembrane. Cu cation is bound by residues histidine 161, cysteine 196, glutamate 198, cysteine 200, histidine 204, and methionine 207. Position 198 (glutamate 198) interacts with Mg(2+). Tyrosine 218 bears the Phosphotyrosine mark.

Belongs to the cytochrome c oxidase subunit 2 family. In terms of assembly, component of the cytochrome c oxidase (complex IV, CIV), a multisubunit enzyme composed of 14 subunits. The complex is composed of a catalytic core of 3 subunits MT-CO1, MT-CO2 and MT-CO3, encoded in the mitochondrial DNA, and 11 supernumerary subunits COX4I, COX5A, COX5B, COX6A, COX6B, COX6C, COX7A, COX7B, COX7C, COX8 and NDUFA4, which are encoded in the nuclear genome. The complex exists as a monomer or a dimer and forms supercomplexes (SCs) in the inner mitochondrial membrane with NADH-ubiquinone oxidoreductase (complex I, CI) and ubiquinol-cytochrome c oxidoreductase (cytochrome b-c1 complex, complex III, CIII), resulting in different assemblies (supercomplex SCI(1)III(2)IV(1) and megacomplex MCI(2)III(2)IV(2)). Found in a complex with TMEM177, COA6, COX18, COX20, SCO1 and SCO2. Interacts with TMEM177 in a COX20-dependent manner. Interacts with COX20. Interacts with COX16. Cu cation is required as a cofactor.

The protein localises to the mitochondrion inner membrane. The catalysed reaction is 4 Fe(II)-[cytochrome c] + O2 + 8 H(+)(in) = 4 Fe(III)-[cytochrome c] + 2 H2O + 4 H(+)(out). Functionally, component of the cytochrome c oxidase, the last enzyme in the mitochondrial electron transport chain which drives oxidative phosphorylation. The respiratory chain contains 3 multisubunit complexes succinate dehydrogenase (complex II, CII), ubiquinol-cytochrome c oxidoreductase (cytochrome b-c1 complex, complex III, CIII) and cytochrome c oxidase (complex IV, CIV), that cooperate to transfer electrons derived from NADH and succinate to molecular oxygen, creating an electrochemical gradient over the inner membrane that drives transmembrane transport and the ATP synthase. Cytochrome c oxidase is the component of the respiratory chain that catalyzes the reduction of oxygen to water. Electrons originating from reduced cytochrome c in the intermembrane space (IMS) are transferred via the dinuclear copper A center (CU(A)) of subunit 2 and heme A of subunit 1 to the active site in subunit 1, a binuclear center (BNC) formed by heme A3 and copper B (CU(B)). The BNC reduces molecular oxygen to 2 water molecules using 4 electrons from cytochrome c in the IMS and 4 protons from the mitochondrial matrix. This Micaelamys namaquensis (Namaqua rock rat) protein is Cytochrome c oxidase subunit 2 (MT-CO2).